The following is a 394-amino-acid chain: Elongation factor Tu (394 aa).

A tr-type G domain is found at 10-204 (KPHVNVGTIG…ALDSYIPEPQ (195 aa)). Positions 19-26 (GHVDHGKT) are G1. Residue 19–26 (GHVDHGKT) coordinates GTP. Residue Thr26 participates in Mg(2+) binding. The interval 60-64 (GITIN) is G2. The segment at 81–84 (DCPG) is G3. Residues 81–85 (DCPGH) and 136–139 (NKCD) each bind GTP. The interval 136–139 (NKCD) is G4. The tract at residues 174–176 (SAL) is G5.

This sequence belongs to the TRAFAC class translation factor GTPase superfamily. Classic translation factor GTPase family. EF-Tu/EF-1A subfamily. Monomer.

Its subcellular location is the cytoplasm. It catalyses the reaction GTP + H2O = GDP + phosphate + H(+). Its function is as follows. GTP hydrolase that promotes the GTP-dependent binding of aminoacyl-tRNA to the A-site of ribosomes during protein biosynthesis. This is Elongation factor Tu from Shewanella baltica (strain OS185).